We begin with the raw amino-acid sequence, 736 residues long: Phosphoribosylformylglycinamidine synthase subunit PurL (736 aa).

Histidine 49 is an active-site residue. ATP-binding residues include tyrosine 52 and lysine 91. Position 93 (glutamate 93) interacts with Mg(2+). Residues 94–97 and arginine 116 contribute to the substrate site; that span reads SHNH. The active-site Proton acceptor is the histidine 95. A Mg(2+)-binding site is contributed by aspartate 117. Glutamine 240 provides a ligand contact to substrate. Aspartate 268 serves as a coordination point for Mg(2+). 312–314 serves as a coordination point for substrate; the sequence is ESQ. The ATP site is built by aspartate 493 and glycine 530. Position 531 (asparagine 531) interacts with Mg(2+). Serine 533 serves as a coordination point for substrate.

The protein belongs to the FGAMS family. As to quaternary structure, monomer. Part of the FGAM synthase complex composed of 1 PurL, 1 PurQ and 2 PurS subunits.

The protein localises to the cytoplasm. The enzyme catalyses N(2)-formyl-N(1)-(5-phospho-beta-D-ribosyl)glycinamide + L-glutamine + ATP + H2O = 2-formamido-N(1)-(5-O-phospho-beta-D-ribosyl)acetamidine + L-glutamate + ADP + phosphate + H(+). The protein operates within purine metabolism; IMP biosynthesis via de novo pathway; 5-amino-1-(5-phospho-D-ribosyl)imidazole from N(2)-formyl-N(1)-(5-phospho-D-ribosyl)glycinamide: step 1/2. Its function is as follows. Part of the phosphoribosylformylglycinamidine synthase complex involved in the purines biosynthetic pathway. Catalyzes the ATP-dependent conversion of formylglycinamide ribonucleotide (FGAR) and glutamine to yield formylglycinamidine ribonucleotide (FGAM) and glutamate. The FGAM synthase complex is composed of three subunits. PurQ produces an ammonia molecule by converting glutamine to glutamate. PurL transfers the ammonia molecule to FGAR to form FGAM in an ATP-dependent manner. PurS interacts with PurQ and PurL and is thought to assist in the transfer of the ammonia molecule from PurQ to PurL. In Rhodopseudomonas palustris (strain HaA2), this protein is Phosphoribosylformylglycinamidine synthase subunit PurL.